A 384-amino-acid chain; its full sequence is Dimethyladenosine transferase (384 aa).

Positions 1–24 (MPKTAKNKRNNAASGPYDKKSKGS) are disordered. S-adenosyl-L-methionine contacts are provided by H39, L41, G66, E87, D115, and N131. The interval 289-309 (MDANSDTDNDNDGDAMEEDDD) is disordered.

The protein belongs to the class I-like SAM-binding methyltransferase superfamily. rRNA adenine N(6)-methyltransferase family.

The protein localises to the cytoplasm. It is found in the nucleus. The protein resides in the nucleolus. It carries out the reaction adenosine(1779)/adenosine(1780) in 18S rRNA + 4 S-adenosyl-L-methionine = N(6)-dimethyladenosine(1779)/N(6)-dimethyladenosine(1780) in 18S rRNA + 4 S-adenosyl-L-homocysteine + 4 H(+). Functionally, specifically dimethylates two adjacent adenosines in the loop of a conserved hairpin near the 3'-end of 18S rRNA in the 40S particle. This Chaetomium thermophilum (strain DSM 1495 / CBS 144.50 / IMI 039719) (Thermochaetoides thermophila) protein is Dimethyladenosine transferase (DIM1).